The primary structure comprises 121 residues: Ribonuclease P protein component (121 aa).

Belongs to the RnpA family. As to quaternary structure, consists of a catalytic RNA component (M1 or rnpB) and a protein subunit.

It catalyses the reaction Endonucleolytic cleavage of RNA, removing 5'-extranucleotides from tRNA precursor.. In terms of biological role, RNaseP catalyzes the removal of the 5'-leader sequence from pre-tRNA to produce the mature 5'-terminus. It can also cleave other RNA substrates such as 4.5S RNA. The protein component plays an auxiliary but essential role in vivo by binding to the 5'-leader sequence and broadening the substrate specificity of the ribozyme. The chain is Ribonuclease P protein component from Erythrobacter litoralis (strain HTCC2594).